Consider the following 1140-residue polypeptide: Chromosome partition protein Smc (1140 aa).

An ATP-binding site is contributed by 34 to 41 (PNGSGKSN). Residues 160–484 (VDQFDSEIER…EKEASAKIAS (325 aa)) are a coiled coil. The region spanning 502–619 (EGVIGLVRDL…VQDIDAGRRL (118 aa)) is the SMC hinge domain. Residues 660 to 990 (LEGMKIQLSS…MLNEKKREVF (331 aa)) adopt a coiled-coil conformation.

Belongs to the SMC family. In terms of assembly, homodimer.

It localises to the cytoplasm. Its function is as follows. Required for chromosome condensation and partitioning. The sequence is that of Chromosome partition protein Smc from Thermoplasma acidophilum (strain ATCC 25905 / DSM 1728 / JCM 9062 / NBRC 15155 / AMRC-C165).